The sequence spans 227 residues: GTP:AMP phosphotransferase AK3, mitochondrial (227 aa).

Residues G17, G19, K20, G21, and T22 each contribute to the GTP site. The residue at position 20 (K20) is an N6-succinyllysine. K34 carries the post-translational modification N6-acetyllysine. S37 is modified (phosphoserine). The segment at 37–66 is NMP; it reads SSGDLLRDNMLRGTEIGVLAKAFIDQGKLI. Residues S38 and R43 each contribute to the AMP site. The residue at position 57 (K57) is an N6-succinyllysine. AMP is bound at residue K64. An N6-acetyllysine; alternate mark is found at K64 and K80. N6-succinyllysine; alternate is present on residues K64 and K80. The AMP site is built by G91, R94, and Q98. Residues 127–164 are LID; the sequence is ARWIHPASGRVYNIEFNPPKTVGIDDLTGEPLIQREDD. Residues R128, Y138, N139, R161, and R172 each coordinate GTP. An N6-acetyllysine; alternate mark is found at K174 and K189. 2 positions are modified to N6-succinyllysine; alternate: K174 and K189. T201 is a GTP binding site. N6-acetyllysine is present on K203.

The protein belongs to the adenylate kinase family. AK3 subfamily. As to quaternary structure, monomer. Highly expressed in heart, skeletal muscle and liver, moderately expressed in pancreas and kidney, and weakly expressed in placenta, brain and lung.

It is found in the mitochondrion matrix. It catalyses the reaction a ribonucleoside 5'-triphosphate + AMP = a ribonucleoside 5'-diphosphate + ADP. It carries out the reaction GTP + AMP = GDP + ADP. The catalysed reaction is ITP + AMP = IDP + ADP. With respect to regulation, inhibited by ATP. Mitochondrial adenylate kinase with a specific GTP:AMP phosphotransferase activity. Could also use ITP as phosphate donor. Its physiological function is to recycle GTP into GDP which is necessary for the TCA cycle in the mitochondrial matrix. This Homo sapiens (Human) protein is GTP:AMP phosphotransferase AK3, mitochondrial.